A 147-amino-acid polypeptide reads, in one-letter code: Large ribosomal subunit protein uL13 (147 aa).

It belongs to the universal ribosomal protein uL13 family. As to quaternary structure, part of the 50S ribosomal subunit.

Functionally, this protein is one of the early assembly proteins of the 50S ribosomal subunit, although it is not seen to bind rRNA by itself. It is important during the early stages of 50S assembly. The polypeptide is Large ribosomal subunit protein uL13 (Mycobacterium leprae (strain Br4923)).